Consider the following 297-residue polypeptide: Mitochondrial substrate carrier family protein P (297 aa).

Solcar repeat units lie at residues Lys-12 to His-98, Ser-104 to Ile-189, and Ile-201 to Phe-293. A run of 6 helical transmembrane segments spans residues Trp-15–Leu-35, Gly-66–Ala-86, Phe-107–Leu-127, Ile-165–Phe-185, Leu-207–Val-227, and Ile-262–Ile-282.

The protein belongs to the mitochondrial carrier (TC 2.A.29) family.

It is found in the mitochondrion inner membrane. Its function is as follows. Mitochondrial solute carriers shuttle metabolites, nucleotides, and cofactors through the mitochondrial inner membrane. Required for the accumulation of coenzyme A in the mitochondrial matrix. The protein is Mitochondrial substrate carrier family protein P (mcfP) of Dictyostelium discoideum (Social amoeba).